The primary structure comprises 190 residues: Large ribosomal subunit protein eL15 (190 aa).

Belongs to the eukaryotic ribosomal protein eL15 family.

The protein is Large ribosomal subunit protein eL15 (rpl15e) of Nanoarchaeum equitans (strain Kin4-M).